A 142-amino-acid chain; its full sequence is Probable pilin MJ0832.1 (142 aa).

A propeptide spanning residues 1-8 is cleaved from the precursor; it reads MLKFRKRG. A QXSXEXXXL motif is present at residues 9–17; sequence QISLEFSLL.

The N-terminus is cleaved by the prepilin peptidase EppA, which recognizes the class III signal sequence.

It is found in the secreted. It localises to the cell surface. The protein resides in the fimbrium. This Methanocaldococcus jannaschii (strain ATCC 43067 / DSM 2661 / JAL-1 / JCM 10045 / NBRC 100440) (Methanococcus jannaschii) protein is Probable pilin MJ0832.1.